We begin with the raw amino-acid sequence, 325 residues long: Putative HTH-type transcriptional regulatory protein HQ_3058A (325 aa).

Residues leucine 132–leucine 186 form the HTH cro/C1-type domain. Positions leucine 143–aspartate 162 form a DNA-binding region, H-T-H motif. The segment at methionine 189–aspartate 211 is disordered. Over residues proline 200 to aspartate 211 the composition is skewed to acidic residues.

This chain is Putative HTH-type transcriptional regulatory protein HQ_3058A, found in Haloquadratum walsbyi (strain DSM 16790 / HBSQ001).